The primary structure comprises 594 residues: Solute carrier family 13 member 1 (594 aa).

A run of 5 helical transmembrane segments spans residues 13–33 (FLLV…IRTK), 40–60 (ILFV…ITAL), 77–97 (VASA…CLAT), 113–133 (VMMV…STAF), and 134–154 (LSMW…VEAV). N-linked (GlcNAc...) asparagine glycosylation is present at Asn174. Residues 192–220 (TNEKKEKTKPAPGSSHDKGKVSRKMETEK) show a composition bias toward basic and acidic residues. Residues 192 to 226 (TNEKKEKTKPAPGSSHDKGKVSRKMETEKNAVTGA) form a disordered region. 8 consecutive transmembrane segments (helical) span residues 239–259 (LMCL…ITGT), 283–303 (SWFL…WIWL), 347–367 (IVTL…DPGF), 380–400 (GYVT…LIPA), 461–481 (LSPL…LIVT), 487–507 (ASNP…AEAI), 511–531 (PLQI…LPVA), and 552–572 (AGLG…FTWI). Asn590 carries an N-linked (GlcNAc...) asparagine glycan.

The protein belongs to the SLC13A/DASS transporter (TC 2.A.47) family. NADC subfamily. Highly expressed in kidney and ileum, detected at lower levels in duodenum/jejunum and colon, and at very low levels in cecum, testis, adrenal and adipose tissues. In terms of tissue distribution, expressed in the kidney.

It is found in the apical cell membrane. It catalyses the reaction sulfate(out) + 3 Na(+)(out) = sulfate(in) + 3 Na(+)(in). The enzyme catalyses selenate(out) + 3 Na(+)(out) = selenate(in) + 3 Na(+)(in). It carries out the reaction thiosulfate(out) + 3 Na(+)(out) = thiosulfate(in) + 3 Na(+)(in). Functionally, sodium:sulfate symporter that mediates sulfate reabsorption in the kidney and small intestine. Can also mediate the transport of selenate and thiosulfate. The sequence is that of Solute carrier family 13 member 1 (Slc13a1) from Mus musculus (Mouse).